The following is a 762-amino-acid chain: Centrosomal protein of 85 kDa (762 aa).

2 disordered regions span residues 1-26 (MAMQ…IQKG) and 94-119 (VMPS…SKLP). Polar residues-rich tracts occupy residues 14–26 (HVTS…IQKG) and 98–111 (TLGT…STPV). S17 carries the post-translational modification Phosphoserine. S126 and S141 each carry phosphoserine. Residues 257–433 (GLSKPLPSQV…QLIRESLKVA (177 aa)) form a mediates interaction with NEK2 and is required for its function in the suppression of centrosome disjunction region. Coiled coils occupy residues 334–657 (EHLL…RQAQ) and 723–750 (PDVI…MSDR). Residues 434-476 (LQKHSEEVKKQEERVKGRDKHINNLKKKCQKESEQNREKQQRI) form a required for centrosome localization and for its function in the suppression of centrosome disjunction region. Basic and acidic residues-rich tracts occupy residues 443-455 (KQEE…DKHI) and 463-474 (QKESEQNREKQQ). 2 disordered regions span residues 443–474 (KQEE…EKQQ) and 541–570 (EAEF…VEME). Phosphoserine is present on S623.

Belongs to the CEP85 family. In terms of assembly, homodimer. Interacts with STIL (via N-terminus); this interaction is essential for robust PLK4 activation and efficient centriole assembly and for PLK4-dependent cell migration. Interacts with PLK4; required for CEP85 to be able to drive centriole duplication and cell migration.

It localises to the cytoplasm. The protein resides in the cytoskeleton. It is found in the microtubule organizing center. The protein localises to the centrosome. Its subcellular location is the spindle pole. It localises to the nucleus. The protein resides in the nucleolus. It is found in the centriole. The protein localises to the cell cortex. Functionally, acts as a regulator of centriole duplication through a direct interaction with STIL, a key factor involved in the early steps of centriole formation. The CEP85-STIL protein complex acts as a modulator of PLK4-driven cytoskeletal rearrangements and directional cell motility. Acts as a negative regulator of NEK2 to maintain the centrosome integrity in interphase. Suppresses centrosome disjunction by inhibiting NEK2 kinase activity. This is Centrosomal protein of 85 kDa from Homo sapiens (Human).